A 407-amino-acid polypeptide reads, in one-letter code: uncharacterized protein (407 aa).

Disordered stretches follow at residues 1–64 (MSRK…EPFD), 110–276 (GFGP…YPQF), and 314–341 (QSRP…HNNP). The segment covering 7 to 32 (KQSNPKRNYKNDNYFQENSYTMTNGF) has biased composition (polar residues). Over residues 33-44 (TKDKDGKPVEFK) the composition is skewed to basic and acidic residues. Residues 122–137 (DSDSEYSDECLTDECS) show a composition bias toward acidic residues. Composition is skewed to polar residues over residues 138 to 147 (DNYNKQSTDS) and 184 to 201 (NFDN…NSQP). Over residues 209–231 (SKSSSKSSKSNKSNKSSKSNKSS) the composition is skewed to low complexity. The span at 232–246 (KSSKSKSNKHSKHKN) shows a compositional bias: basic residues. Residues 247-258 (KSDSSSDSDEKT) show a composition bias toward basic and acidic residues. 2 stretches are compositionally biased toward basic residues: residues 259 to 270 (HKHKDRRHRRGR) and 316 to 341 (RPRK…HNNP).

This is an uncharacterized protein from Acanthamoeba polyphaga mimivirus (APMV).